The following is a 488-amino-acid chain: Proline--tRNA ligase (488 aa).

Belongs to the class-II aminoacyl-tRNA synthetase family. ProS type 3 subfamily. Homodimer.

The protein resides in the cytoplasm. It catalyses the reaction tRNA(Pro) + L-proline + ATP = L-prolyl-tRNA(Pro) + AMP + diphosphate. Its function is as follows. Catalyzes the attachment of proline to tRNA(Pro) in a two-step reaction: proline is first activated by ATP to form Pro-AMP and then transferred to the acceptor end of tRNA(Pro). The chain is Proline--tRNA ligase from Borreliella burgdorferi (strain ZS7) (Borrelia burgdorferi).